The sequence spans 124 residues: MSDMSDLEDDQTGHCGSGEHSGPFDPKRHAREQHNALERRRRDNIKDMYTSLREVVPDANGERVQASRAVILKKAIESIEKGQSDSATLSVDVAEQESKNAKLREEIARLKAKKDPSSSQSIIQ.

Positions methionine 1–aspartate 10 are enriched in acidic residues. A disordered region spans residues methionine 1–asparagine 44. Positions histidine 29–arginine 42 are basic motif. The region spanning histidine 29 to glycine 82 is the bHLH domain. Residues glutamate 32–asparagine 44 show a composition bias toward basic and acidic residues. Residues aspartate 43–glycine 82 are helix-loop-helix motif. Residues serine 86–lysine 113 adopt a coiled-coil conformation.

Belongs to the MAX family. Heterodimer with mdl-1 in presence and absence of DNA. Interacts with tdpt-1; the interaction promotes axon regeneration after injury. In terms of tissue distribution, expressed in D-type motor neurons.

The protein localises to the nucleus. Its function is as follows. Transcriptional regulator which binds to the E box motif 5'-CACGTG-3', when in a heterodimeric complex with mdl-1. Involved in the control of lifespan in response to dietary restriction, the decline in protein homeostasis associated with normal aging and may overlap with the insulin-like signaling pathway. Involved in promoting infection by the microsporidian pathogen N.parisii. Required for the expression of svh-2 and the promotion of axon regeneration after injury. The protein is Max-like protein 1 of Caenorhabditis elegans.